Consider the following 67-residue polypeptide: Medusin-H1 (67 aa).

Positions 1–22 (MDFLKKSLFLVLFLGFFSLSIC) are cleaved as a signal peptide. A propeptide spanning residues 23–48 (EEEKRETEEKENEQEDDREERREEKR) is cleaved from the precursor. The segment at 24-46 (EEKRETEEKENEQEDDREERREE) is disordered. The segment covering 31–40 (EKENEQEDDR) has biased composition (acidic residues). Position 66 is a leucine amide (leucine 66).

The protein belongs to the frog skin active peptide (FSAP) family. Medusin subfamily. In terms of tissue distribution, expressed by the skin glands.

Its subcellular location is the secreted. Antimicrobial peptide with activity against Gram-positive bacteria (S.aureus, MIC=32 mg/L) and fungi (C.albicans, MIC=128 mg/L). Shows weak hemolytic activity. The chain is Medusin-H1 from Pithecopus hypochondrialis (Orange-legged leaf frog).